Here is a 306-residue protein sequence, read N- to C-terminus: MSNEFITFEKISRKSWKQLHQKSKPLLTQEELTSITSLNDNIDINDVVEVYLPLIHLIQVYKIAQENLSFSKSLFLKKDIQQRPFIIGISGSVAVGKSTTSRLLQLLLARTHKTSTVELVTTDGFLYPNSTLIKNNMLNRKGFPESYNMELLLNFLDTVKGGQTASAPVYSHEIYDIVPDQQQTFTNPDFLIIEGINVFQNQQNNRLYMSDYFDFSIYIDADSHHIEQWYLERFLSLLELAKHDPANYYTRYTSLPQNEAIAFAKKVWKTINLENLEKFIEPTRNRAELILHKAADHKIDEIYLKK.

91–98 (GSVAVGKS) is an ATP binding site.

Belongs to the prokaryotic pantothenate kinase family.

The protein localises to the cytoplasm. The enzyme catalyses (R)-pantothenate + ATP = (R)-4'-phosphopantothenate + ADP + H(+). It participates in cofactor biosynthesis; coenzyme A biosynthesis; CoA from (R)-pantothenate: step 1/5. This Streptococcus equi subsp. equi (strain 4047) protein is Pantothenate kinase.